Consider the following 528-residue polypeptide: Calcium-dependent protein kinase 4 (528 aa).

The interval 1–36 is disordered; sequence MGQEVSSVNNTKNEHHKTNKKSLKGGNERHEMKESS. G2 carries the N-myristoyl glycine lipid modification. The span at 14–23 shows a compositional bias: basic residues; the sequence is EHHKTNKKSL. One can recognise a Protein kinase domain in the interval 71–329; that stretch reads KGIKILGKGS…RDALEHEWIK (259 aa). ATP contacts are provided by residues 76-84 and K99; that span reads LGKGSFGEV. The active-site Proton acceptor is D193. The J domain autoinhibitory motif motif lies at 350–358; that stretch reads NIRQFQSTQ. A j domain region spans residues 350–386; that stretch reads NIRQFQSTQKLAQAALLYMGSKLTTIDETKELTKIFK. The short motif at 359 to 368 is the J domain EF-hand interaction motif element; that stretch reads KLAQAALLYM. EF-hand domains are found at residues 376-411, 427-458, 459-494, and 496-528; these read DETKELTKIFKKMDKNGDGQLDRNELIIGYKELLKL, EVDQILNSIDLDQNGYIEYSEFLTVSIDRKLL, LSTERLEKAFKLFDKDGSGKISANELAQLFGLSDVS, and ECWKTVLKEVDQNNDGEIDFKEFRDMLVKLCNY. Ca(2+)-binding residues include D389, N391, D393, Q395, E400, D436, D438, N440, Y442, E447, D472, D474, S476, K478, E483, D506, N508, D510, E512, and E517.

Belongs to the protein kinase superfamily. Ser/Thr protein kinase family. CDPK subfamily. As to quaternary structure, may interact with the pre-replication MCM complex prior male gametogenesis activation. Requires Mg(2+) as cofactor. In terms of processing, myristoylated; myristoylation may target it to different subcellular compartments. During male gametogenesis, myristoylation is required to initiate DNA replication but not for mitotic spindle assembly or axoneme activation. Not palmitoylated. Post-translationally, may be autophosphorylated on Thr-234 in vitro.

The protein resides in the cytoplasm. The protein localises to the cell membrane. It carries out the reaction L-seryl-[protein] + ATP = O-phospho-L-seryl-[protein] + ADP + H(+). The enzyme catalyses L-threonyl-[protein] + ATP = O-phospho-L-threonyl-[protein] + ADP + H(+). Activated by calcium. Upon calcium binding to the EF-hand domains, the C-terminus of the junction domain (J domain) undergoes a conformational change which results in the dissociation of the pseudo-substrate inhibitory motif from the catalytic domain. This, in turn, may facilitate the autophosphorylation of the activation loop at Thr-234, which leads to the kinase activation. Intracellular calcium increase is triggered by xanthurenic acid (XA), a small mosquito molecule that induces the differentiation of specialized transmission stages, the gametocytes, into male and female gametes. Activated by a decrease in temperature (20 degrees Celsius) and an increase in pH (7.6) occurring when the parasite is ingested by in the mosquito. Its function is as follows. Calcium-dependent protein kinase which acts as a sensor and effector of intracellular Ca(2+) levels probably in part downstream of cGMP-activated PKG kinase. Plays a central role in the host erythrocytes and hepatocytes infection cycles, sexual reproduction and mosquito transmission of the parasite. During the liver stage, involved in sporozoite motility and thus in sporozoite invasion of host hepatocytes, probably together with CDPK1 and CDPK5. Involved in merosome egress from host hepatocytes, probably together with CDPK5. During the asexual blood stage, involved in merozoite invasion of host erythrocytes and motility by stabilizing the inner membrane complex, a structure below the plasma membrane which acts as an anchor for the glidosome, an acto-myosin motor. Required for cell cycle progression in the male gametocyte. During male gametogenesis in the mosquito gut, required to initiate the first round of DNA replication, probably by facilitating the assembly of the pre-replicative MCM complex, to assemble the first mitotic spindle and, at the end of gametogenesis, to initiate axoneme motility, cytokinesis and subsequent exflagellation. For each of these steps, may phosphorylate SOC1, SOC2 and SOC3, respectively. Together with CDPK1, regulates ookinete gliding in the mosquito host midgut. The chain is Calcium-dependent protein kinase 4 from Plasmodium falciparum (isolate 3D7).